Reading from the N-terminus, the 112-residue chain is MATISPSPDLFTLVNVFGVAPEKQRELRDHLVQVTEDLIRHMPGFVSATFHLSRDGEQVVNYAQWRSEADFRAMHADPRLQPHFDYCRSVSRPKPIFCEVTHSFGATSPEGA.

One can recognise an ABM domain in the interval 11–100 (FTLVNVFGVA…SRPKPIFCEV (90 aa)).

As to quaternary structure, homotrimer.

The catalysed reaction is tetracenomycin F1 + O2 = tetracenomycin D3 + H2O + H(+). The protein operates within antibiotic biosynthesis; tetracenomycin C biosynthesis. Inhibited by p-chloromercuribenzoic acid, N-ethylmaleimide and diethyl pyrocarbonate. Its function is as follows. Oxygenase required for conversion of tetracenomycin F1 to tetracenomycin D3. The polypeptide is Tetracenomycin-F1 monooxygenase (tcmH) (Streptomyces glaucescens).